The chain runs to 36 residues: Thrombin (36 aa).

In terms of domain architecture, Peptidase S1 spans isoleucine 19–leucine 36.

It belongs to the peptidase S1 family. In terms of assembly, forms a heterodimer with SERPINA5. The gamma-carboxyglutamyl residues, which bind calcium ions, result from the carboxylation of glutamyl residues by a microsomal enzyme, the vitamin K-dependent carboxylase. The modified residues are necessary for the calcium-dependent interaction with a negatively charged phospholipid surface, which is essential for the conversion of prothrombin to thrombin. Post-translationally, N-glycosylated. As to expression, expressed by the liver and secreted in plasma.

Its subcellular location is the secreted. The catalysed reaction is Selective cleavage of Arg-|-Gly bonds in fibrinogen to form fibrin and release fibrinopeptides A and B.. Its activity is regulated as follows. Inhibited by SERPINA5. Its function is as follows. Thrombin, which cleaves bonds after Arg and Lys, converts fibrinogen to fibrin and activates factors V, VII, VIII, XIII, and, in complex with thrombomodulin, protein C. Functions in blood homeostasis, inflammation and wound healing. This chain is Thrombin, found in Salmo salar (Atlantic salmon).